Here is a 393-residue protein sequence, read N- to C-terminus: Putative bacilysin exporter BacE (393 aa).

10 helical membrane passes run 11-31 (LLFG…ALLI), 43-63 (SGVI…GVLV), 69-89 (VKIM…LTFL), 92-112 (GEYP…GVFF), 133-155 (LFAK…FLLG), 160-177 (LAVA…FFIS), 215-235 (MFTM…FPIV), 244-264 (IGNF…AALV), 287-307 (ALFL…LFFI), and 353-373 (IVDA…LFLH).

It belongs to the major facilitator superfamily.

Its subcellular location is the cell membrane. In terms of biological role, part of the bacilysin biosynthesis operon. May be involved in self-resistance to bacilysin by permitting efflux of this antibiotic. In Bacillus amyloliquefaciens (Bacillus velezensis), this protein is Putative bacilysin exporter BacE (bacE).